A 381-amino-acid polypeptide reads, in one-letter code: Succinyl-diaminopimelate desuccinylase (381 aa).

Residue H68 participates in Zn(2+) binding. The active site involves D70. Position 101 (D101) interacts with Zn(2+). E135 acts as the Proton acceptor in catalysis. Zn(2+) contacts are provided by E136, E164, and H350.

The protein belongs to the peptidase M20A family. DapE subfamily. In terms of assembly, homodimer. Requires Zn(2+) as cofactor. It depends on Co(2+) as a cofactor.

It catalyses the reaction N-succinyl-(2S,6S)-2,6-diaminopimelate + H2O = (2S,6S)-2,6-diaminopimelate + succinate. It functions in the pathway amino-acid biosynthesis; L-lysine biosynthesis via DAP pathway; LL-2,6-diaminopimelate from (S)-tetrahydrodipicolinate (succinylase route): step 3/3. Catalyzes the hydrolysis of N-succinyl-L,L-diaminopimelic acid (SDAP), forming succinate and LL-2,6-diaminopimelate (DAP), an intermediate involved in the bacterial biosynthesis of lysine and meso-diaminopimelic acid, an essential component of bacterial cell walls. This Neisseria gonorrhoeae (strain NCCP11945) protein is Succinyl-diaminopimelate desuccinylase.